Consider the following 114-residue polypeptide: C-X-C motif chemokine 6 (114 aa).

The first 37 residues, methionine 1–alanine 37, serve as a signal peptide directing secretion. 2 cysteine pairs are disulfide-bonded: cysteine 49–cysteine 75 and cysteine 51–cysteine 91.

The protein belongs to the intercrine alpha (chemokine CxC) family.

It localises to the secreted. Chemotactic for neutrophil granulocytes. Signals through binding and activation of its receptors (CXCR1 and CXCR2). In addition to its chemotactic and angiogenic properties, it has strong antibacterial activity against Gram-positive and Gram-negative bacteria (90-fold-higher when compared to CXCL5 and CXCL7). The protein is C-X-C motif chemokine 6 (CXCL6) of Homo sapiens (Human).